The chain runs to 437 residues: Probable inactive DNA (cytosine-5)-methyltransferase DRM1B (437 aa).

UBA domains lie at 20 to 60 and 120 to 164; these read SAPS…LLQL and EMSE…IYAP. Positions 243–437 constitute an SAM-dependent MTase DRM-type domain; it reads VHRNLPDHAL…LIQLHTTSLC (195 aa).

The protein belongs to the class I-like SAM-binding methyltransferase superfamily. DRM-methyltransferase family.

The protein localises to the nucleus. Involved in de novo DNA methylation. Involved in RNA-directed DNA methylation (RdDM). This Oryza sativa subsp. japonica (Rice) protein is Probable inactive DNA (cytosine-5)-methyltransferase DRM1B.